Consider the following 424-residue polypeptide: Serine--tRNA ligase (424 aa).

230-232 (TAE) contributes to the L-serine binding site. 261-263 (RSE) contacts ATP. Glu-284 lines the L-serine pocket. 348–351 (EISS) lines the ATP pocket. L-serine is bound at residue Ser-384.

The protein belongs to the class-II aminoacyl-tRNA synthetase family. Type-1 seryl-tRNA synthetase subfamily. As to quaternary structure, homodimer. The tRNA molecule binds across the dimer.

The protein resides in the cytoplasm. The enzyme catalyses tRNA(Ser) + L-serine + ATP = L-seryl-tRNA(Ser) + AMP + diphosphate + H(+). It catalyses the reaction tRNA(Sec) + L-serine + ATP = L-seryl-tRNA(Sec) + AMP + diphosphate + H(+). It functions in the pathway aminoacyl-tRNA biosynthesis; selenocysteinyl-tRNA(Sec) biosynthesis; L-seryl-tRNA(Sec) from L-serine and tRNA(Sec): step 1/1. Its function is as follows. Catalyzes the attachment of serine to tRNA(Ser). Is also able to aminoacylate tRNA(Sec) with serine, to form the misacylated tRNA L-seryl-tRNA(Sec), which will be further converted into selenocysteinyl-tRNA(Sec). In Streptococcus pneumoniae serotype 19F (strain G54), this protein is Serine--tRNA ligase.